Consider the following 264-residue polypeptide: tRNA1(Val) (adenine(37)-N6)-methyltransferase (264 aa).

This sequence belongs to the methyltransferase superfamily. tRNA (adenine-N(6)-)-methyltransferase family.

The protein localises to the cytoplasm. The enzyme catalyses adenosine(37) in tRNA1(Val) + S-adenosyl-L-methionine = N(6)-methyladenosine(37) in tRNA1(Val) + S-adenosyl-L-homocysteine + H(+). Its function is as follows. Specifically methylates the adenine in position 37 of tRNA(1)(Val) (anticodon cmo5UAC). In Shewanella pealeana (strain ATCC 700345 / ANG-SQ1), this protein is tRNA1(Val) (adenine(37)-N6)-methyltransferase.